The following is a 172-amino-acid chain: Ribosome maturation factor RimM (172 aa).

The PRC barrel domain maps to 95–168 (QEGEFYYHQI…CVDVELMEGL (74 aa)).

This sequence belongs to the RimM family. In terms of assembly, binds ribosomal protein uS19.

The protein localises to the cytoplasm. In terms of biological role, an accessory protein needed during the final step in the assembly of 30S ribosomal subunit, possibly for assembly of the head region. Essential for efficient processing of 16S rRNA. May be needed both before and after RbfA during the maturation of 16S rRNA. It has affinity for free ribosomal 30S subunits but not for 70S ribosomes. This is Ribosome maturation factor RimM from Streptococcus pyogenes serotype M49 (strain NZ131).